The following is a 465-amino-acid chain: UDP-N-acetylmuramoylalanine--D-glutamate ligase (465 aa).

Position 127-133 (127-133) interacts with ATP; it reads GSNGKST.

This sequence belongs to the MurCDEF family.

The protein resides in the cytoplasm. The enzyme catalyses UDP-N-acetyl-alpha-D-muramoyl-L-alanine + D-glutamate + ATP = UDP-N-acetyl-alpha-D-muramoyl-L-alanyl-D-glutamate + ADP + phosphate + H(+). Its pathway is cell wall biogenesis; peptidoglycan biosynthesis. Functionally, cell wall formation. Catalyzes the addition of glutamate to the nucleotide precursor UDP-N-acetylmuramoyl-L-alanine (UMA). The polypeptide is UDP-N-acetylmuramoylalanine--D-glutamate ligase (Cereibacter sphaeroides (strain ATCC 17025 / ATH 2.4.3) (Rhodobacter sphaeroides)).